The chain runs to 283 residues: Acetylglutamate kinase (283 aa).

Substrate contacts are provided by residues 64-65 (GG), Arg86, and Asn178.

It belongs to the acetylglutamate kinase family. ArgB subfamily.

Its subcellular location is the cytoplasm. It carries out the reaction N-acetyl-L-glutamate + ATP = N-acetyl-L-glutamyl 5-phosphate + ADP. It participates in amino-acid biosynthesis; L-arginine biosynthesis; N(2)-acetyl-L-ornithine from L-glutamate: step 2/4. Its function is as follows. Catalyzes the ATP-dependent phosphorylation of N-acetyl-L-glutamate. The sequence is that of Acetylglutamate kinase from Lactococcus lactis subsp. lactis (strain IL1403) (Streptococcus lactis).